The primary structure comprises 861 residues: MNLKKTLLMPQTAFEMQGKLTTKEQQFQAFWQSKRIYQKLHRQNKDKPQKILHDGPPYANGNIHVGHALNKILKDFVLRSWNLQGFGTVFIPGWDCHGLPIEHAVSKKDPQHYASLSLSEKRDLCKQFALSQIAIQKAQFQRLGLLNDFSKYYKTIDESFQQNELDLFLQAVKKDLIFQALKPTYWSPVSRTSLAEAEIEYKEVKTIGLYLTFTVVQSAVLNSGTKLLVWTTTPWTLPTNQAIAVHPQFEYLLFTYNNEQYVVLASLFESLKTKFGWTDAIQVQTISGSQLQNTTYKHCLYDKVNPVLLGNHVLCNEGTGLVHTSPAYGLDDFYLCKQNKLNEALVSLDEKGVFNDTLNDPVLTGLFYLKANDVIIERLKQHHNFVFSESFLHREPHDWRSKTPVIYRASKQLFIKTKSIQSKLKRQIKRVKFVNNKNKERLQEMLLQRAEWCISRQRVWGLPIPLIYADNQPLLDVTTIKYTIQQLKKYGIDSWFEKDINFFLNPKKIQPGVEYKKETDTLEVWFDSGSTYNVLISNKLNFPADLYLEGSDQYRGWFNSSASCGIIQTDQLPFKSLISHGFTLDEHGNKMSKSLGNVVDPLKLCDQYGADILRLWVTNVDWQVDNRIGDNIIKQIVEQYRRIRNSLLRFILGNLNHFNFGEMKDYRFALEDKIVIHKTNALVQELHQWLKQYNFLNCLKAINKFVLWLSGWYFEIIKDTLYCDAKTNPNRVAKQAVLNYIFTQLIGFLNIFIPHTAEDAWQNYLLPKKPVSVNLFAGPAMFKVANVKGLDRLHESFSAIKDRAYAAIEQARQNGVITKNNQVVLTLGVDSTSAIDPTSCKTFSSLAKRKPGKYNEWPQRN.

Residues 57-67 (PYANGNIHVGH) carry the 'HIGH' region motif. An L-isoleucyl-5'-AMP-binding site is contributed by E549. The 'KMSKS' region signature appears at 590-594 (KMSKS). K593 is an ATP binding site.

This sequence belongs to the class-I aminoacyl-tRNA synthetase family. IleS type 1 subfamily. Monomer.

It localises to the cytoplasm. The catalysed reaction is tRNA(Ile) + L-isoleucine + ATP = L-isoleucyl-tRNA(Ile) + AMP + diphosphate. Functionally, catalyzes the attachment of isoleucine to tRNA(Ile). As IleRS can inadvertently accommodate and process structurally similar amino acids such as valine, to avoid such errors it has two additional distinct tRNA(Ile)-dependent editing activities. One activity is designated as 'pretransfer' editing and involves the hydrolysis of activated Val-AMP. The other activity is designated 'posttransfer' editing and involves deacylation of mischarged Val-tRNA(Ile). This Mycoplasma pneumoniae (strain ATCC 29342 / M129 / Subtype 1) (Mycoplasmoides pneumoniae) protein is Isoleucine--tRNA ligase.